The following is a 119-amino-acid chain: Ghilanten (119 aa).

At Gln-1 the chain carries Pyrrolidone carboxylic acid. 10 cysteine pairs are disulfide-bonded: Cys-8/Cys-19, Cys-13/Cys-26, Cys-28/Cys-48, Cys-33/Cys-51, Cys-37/Cys-53, Cys-62/Cys-73, Cys-67/Cys-80, Cys-82/Cys-103, Cys-88/Cys-106, and Cys-92/Cys-108. Positions 28-53 (CPEVRCRVYCSHGFQRSRYGCEVCRC) constitute an Antistasin-like 1 domain. In terms of domain architecture, Antistasin-like 2 spans 83 to 108 (KIDINCRKTCPNGLKRDKLGCEYCEC). Heparin-binding positions include 97–100 (KRDK) and 111–118 (KRKLVPRL).

It belongs to the protease inhibitor I15 (antistasin) family.

Its subcellular location is the secreted. Functionally, this highly disulfide-bonded protein is a potent inhibitor of factor Xa. May have therapeutic utility as an anticoagulant. Also exhibits a strong metastatic activity. This chain is Ghilanten, found in Haementeria ghilianii (Amazon leech).